We begin with the raw amino-acid sequence, 76 residues long: Protein CYSTEINE-RICH TRANSMEMBRANE MODULE 11 (76 aa).

The tract at residues 19–45 (GPPPPVGVPPQYYPPPPPPPPPPPPPR) is disordered. The chain crosses the membrane as a helical span at residues 47-63 (VGFLEGLLAALCCCCLV).

Belongs to the CYSTM1 family. As to quaternary structure, heterodimers. Interacts with CYSTM6, CYSTM7 and WIH1/CYSTM13. As to expression, mostly expressed in stems, siliques, leaves and flowers and, to a lower extent, in roots.

The protein localises to the cell membrane. The protein resides in the cytoplasm. Involved in resistance to abiotic stress. The protein is Protein CYSTEINE-RICH TRANSMEMBRANE MODULE 11 of Arabidopsis thaliana (Mouse-ear cress).